A 33-amino-acid chain; its full sequence is U13-ctenitoxin-Pn1c (33 aa).

Intrachain disulfides connect Cys3–Cys17, Cys10–Cys21, and Cys16–Cys30.

In terms of tissue distribution, expressed by the venom gland.

It is found in the secreted. In terms of biological role, acts as a neurotoxin. The sequence is that of U13-ctenitoxin-Pn1c from Phoneutria nigriventer (Brazilian armed spider).